The chain runs to 256 residues: 6-carboxyhexanoate--CoA ligase (256 aa).

It belongs to the BioW family. In terms of assembly, homodimer. The cofactor is Mg(2+).

It carries out the reaction heptanedioate + ATP + CoA = 6-carboxyhexanoyl-CoA + AMP + diphosphate. Its pathway is metabolic intermediate metabolism; pimeloyl-CoA biosynthesis; pimeloyl-CoA from pimelate: step 1/1. Functionally, catalyzes the transformation of pimelate into pimeloyl-CoA with concomitant hydrolysis of ATP to AMP. The polypeptide is 6-carboxyhexanoate--CoA ligase (Bacillus velezensis (strain DSM 23117 / BGSC 10A6 / LMG 26770 / FZB42) (Bacillus amyloliquefaciens subsp. plantarum)).